The following is a 132-amino-acid chain: Small ribosomal subunit protein uS8 (132 aa).

The protein belongs to the universal ribosomal protein uS8 family. Part of the 30S ribosomal subunit. Contacts proteins S5 and S12.

Functionally, one of the primary rRNA binding proteins, it binds directly to 16S rRNA central domain where it helps coordinate assembly of the platform of the 30S subunit. The sequence is that of Small ribosomal subunit protein uS8 from Limosilactobacillus reuteri (strain DSM 20016) (Lactobacillus reuteri).